Reading from the N-terminus, the 365-residue chain is Keratin-associated protein 10-6 (365 aa).

A run of 29 repeats spans residues 41–45, 46–50, 67–71, 89–93, 99–103, 109–113, 114–118, 119–123, 124–128, 129–133, 135–139, 145–149, 155–159, 160–164, 172–176, 186–190, 208–212, 218–222, 228–232, 233–237, 238–242, 250–254, 260–264, 270–274, 282–286, 292–296, 297–301, 316–320, and 334–338. Positions 41-338 are 29 X 5 AA repeats of C-C-X(3); it reads CCEPPCCAPA…SCQPSCCRTA (298 aa).

It belongs to the KRTAP type 10 family. In terms of assembly, interacts with hair keratins. As to expression, restricted to a narrow region of the hair fiber cuticle, lying approximately 20 cell layers above the apex of the dermal papilla of the hair root; not detected in any other tissues.

Its function is as follows. In the hair cortex, hair keratin intermediate filaments are embedded in an interfilamentous matrix, consisting of hair keratin-associated proteins (KRTAP), which are essential for the formation of a rigid and resistant hair shaft through their extensive disulfide bond cross-linking with abundant cysteine residues of hair keratins. The matrix proteins include the high-sulfur and high-glycine-tyrosine keratins. This chain is Keratin-associated protein 10-6 (KRTAP10-6), found in Homo sapiens (Human).